A 269-amino-acid polypeptide reads, in one-letter code: Thymidylate synthase (269 aa).

Residue R21 participates in dUMP binding. A (6R)-5,10-methylene-5,6,7,8-tetrahydrofolate-binding site is contributed by H51. 126–127 (RR) contributes to the dUMP binding site. C146 (nucleophile) is an active-site residue. DUMP-binding positions include 171-174 (RSGD), N182, and 212-214 (HLY). D174 serves as a coordination point for (6R)-5,10-methylene-5,6,7,8-tetrahydrofolate. A268 serves as a coordination point for (6R)-5,10-methylene-5,6,7,8-tetrahydrofolate.

It belongs to the thymidylate synthase family. Bacterial-type ThyA subfamily. Homodimer.

It localises to the cytoplasm. The catalysed reaction is dUMP + (6R)-5,10-methylene-5,6,7,8-tetrahydrofolate = 7,8-dihydrofolate + dTMP. The protein operates within pyrimidine metabolism; dTTP biosynthesis. In terms of biological role, catalyzes the reductive methylation of 2'-deoxyuridine-5'-monophosphate (dUMP) to 2'-deoxythymidine-5'-monophosphate (dTMP) while utilizing 5,10-methylenetetrahydrofolate (mTHF) as the methyl donor and reductant in the reaction, yielding dihydrofolate (DHF) as a by-product. This enzymatic reaction provides an intracellular de novo source of dTMP, an essential precursor for DNA biosynthesis. The sequence is that of Thymidylate synthase from Methylocella silvestris (strain DSM 15510 / CIP 108128 / LMG 27833 / NCIMB 13906 / BL2).